The primary structure comprises 350 residues: Meiotic driver wtf30 (350 aa).

The tract at residues 1 to 92 (MKNKYYPLRS…RENHSSGTTD (92 aa)) is disordered. Residues 11 to 29 (SIDELSTKNDNEIDLEKGP) are compositionally biased toward basic and acidic residues. Polar residues predominate over residues 57 to 72 (GANNPNLFNTDESTTP). 7 helical membrane passes run 97–117 (FLIK…PAVC), 134–154 (WVYF…LWCF), 165–185 (CVKV…IGLF), 190–210 (EMMI…FVYI), 226–246 (CTIS…FWTF), 253–273 (LAKV…TMFL), and 280–300 (WTGC…LFLC).

It belongs to the WTF family. Homomer. Forms protein aggregates. The two isoforms can interact with each other and with themselves. High sequence similarity is required for their interaction.

It is found in the spore membrane. Its subcellular location is the vacuole membrane. The protein resides in the ascus epiplasm. The protein localises to the cytoplasm. It localises to the endoplasmic reticulum membrane. Functionally, promotes unequal transmission of alleles from the parental zygote to progeny spores by acting as poison/antidote system where the poison and antidote proteins are produced from the same locus; the poison component is trans-acting and targets all spores within an ascus whereas the antidote component is spore-specific, leading to poisoning of all progeny that do not inherit the allele. Its function is as follows. Localizes isoform 2 to the vacuole thereby facilitating its degradation. In terms of biological role, forms toxic aggregates that disrupt spore maturation. This Schizosaccharomyces kambucha (Fission yeast) protein is Meiotic driver wtf30.